A 209-amino-acid chain; its full sequence is Small ribosomal subunit protein uS3 (209 aa).

A KH type-2 domain is found at 17–86; the sequence is IDEYLEKELR…NPQIEVEEIK (70 aa).

It belongs to the universal ribosomal protein uS3 family. In terms of assembly, part of the 30S ribosomal subunit.

Its function is as follows. Binds the lower part of the 30S subunit head. In Thermococcus gammatolerans (strain DSM 15229 / JCM 11827 / EJ3), this protein is Small ribosomal subunit protein uS3.